Consider the following 66-residue polypeptide: Small ribosomal subunit protein bS21 (66 aa).

It belongs to the bacterial ribosomal protein bS21 family.

This Rickettsia felis (strain ATCC VR-1525 / URRWXCal2) (Rickettsia azadi) protein is Small ribosomal subunit protein bS21.